The chain runs to 235 residues: Caffeoyl-CoA O-methyltransferase (235 aa).

Residue Lys-8 participates in substrate binding. S-adenosyl-L-methionine is bound by residues Val-52, Glu-74, 76–77, Ser-82, Asp-100, and Ala-129; that span reads GV. Substrate is bound at residue Asp-151. Asp-151 serves as a coordination point for a divalent metal cation. Asp-153 provides a ligand contact to S-adenosyl-L-methionine. Positions 177 and 178 each coordinate a divalent metal cation.

It belongs to the class I-like SAM-binding methyltransferase superfamily. Cation-dependent O-methyltransferase family. CCoAMT subfamily. The cofactor is a divalent metal cation.

The enzyme catalyses (E)-caffeoyl-CoA + S-adenosyl-L-methionine = (E)-feruloyl-CoA + S-adenosyl-L-homocysteine + H(+). It participates in aromatic compound metabolism; phenylpropanoid biosynthesis. Methylates caffeoyl-CoA to feruloyl-CoA and 5-hydroxyferuloyl-CoA to sinapoyl-CoA. Plays a role in the synthesis of feruloylated polysaccharides. Involved in the reinforcement of the plant cell wall. Also involved in the responding to wounding or pathogen challenge by the increased formation of cell wall-bound ferulic acid polymers. This Populus kitakamiensis (Aspen) protein is Caffeoyl-CoA O-methyltransferase.